A 565-amino-acid chain; its full sequence is Sulfite reductase [NADPH] hemoprotein beta-component (565 aa).

The [4Fe-4S] cluster site is built by Cys-429, Cys-435, Cys-474, and Cys-478. Cys-478 serves as a coordination point for siroheme.

This sequence belongs to the nitrite and sulfite reductase 4Fe-4S domain family. As to quaternary structure, alpha(8)-beta(8). The alpha component is a flavoprotein, the beta component is a hemoprotein. Siroheme is required as a cofactor. [4Fe-4S] cluster serves as cofactor.

It catalyses the reaction hydrogen sulfide + 3 NADP(+) + 3 H2O = sulfite + 3 NADPH + 4 H(+). Its pathway is sulfur metabolism; hydrogen sulfide biosynthesis; hydrogen sulfide from sulfite (NADPH route): step 1/1. Functionally, component of the sulfite reductase complex that catalyzes the 6-electron reduction of sulfite to sulfide. This is one of several activities required for the biosynthesis of L-cysteine from sulfate. The sequence is that of Sulfite reductase [NADPH] hemoprotein beta-component from Shewanella baltica (strain OS223).